The following is a 723-amino-acid chain: MNPTEAKAIPGSKQLEGPHSPNKKRHKKQAVKTEPEKKSQSTKPSVVHEKKTQEVKPKEHTEPKSQPKHPSDTRSKHAPKEKAVSKSSEQPPSEKSTKPKTKSQDEISGGGKSAVPAVAAAASAEPADKNKESKLLTSAVPVESKPSKPSAKSDMDTALDDLIDTLGEPEETKEDTTTYTGPEVSDPMSSTYIEELGKREVTLPPKYRELLNKEEGIAGPPPDSSKPLGPNDAIDALSSDFTCSSPTADAKKTEKEKSTEEALKAQSAGVIRSAAPPKEKRRKVEEDTMTEQALEALSASLGTRKPRPELDPSSIKEVDEAKAKEEKVKKCGEDEERVPSEYRLKPATDKDGKPLLPEAEEKPKPLSESELIDELSEDFDRSKCKEKQSKPTEKNRGIPGRCPRACARGCASDLHVFCAVSSTHSSSSEGMVPDDAVEALAGSLGKKEADPEDGKPVEDKVKEKAKEEDREKLGEREETIPPDYRLEEAKDKDGKPLPPKEVKEPLPPLSEDFLLDALSKDFTVPSDTSSPQFEDAKLSVVVSEVVSQTPAPTTQAAGPPRDSARDNKELDDALDQLSDSLGQRQPDPDEHKPVEDKVKEKAKAEHRDKLGERDDTIPPKYQHLLDDNKEGTPGKPKRSESPRHQRSPRHQRNLQVPRTPLTPSQGTWTAVPQLQKPQQTQQRTKTRSLLPSDKAPRNGGKAKDSTKAKEETSKPKADGKSTS.

2 disordered regions span residues 1–402 and 422–509; these read MNPT…PGRC and STHS…LPPL. The span at 21–30 shows a compositional bias: basic residues; sequence PNKKRHKKQA. K32 is covalently cross-linked (Glycyl lysine isopeptide (Lys-Gly) (interchain with G-Cter in SUMO2)). Basic and acidic residues predominate over residues 46–84; that stretch reads VVHEKKTQEVKPKEHTEPKSQPKHPSDTRSKHAPKEKAV. An N6-acetyllysine modification is found at K50. 2 stretches are compositionally biased toward low complexity: residues 85 to 94 and 113 to 125; these read SKSSEQPPSE and SAVP…ASAE. At S87 the chain carries Phosphoserine. Residue T137 is modified to Phosphothreonine. The span at 157–173 shows a compositional bias: acidic residues; sequence TALDDLIDTLGEPEETK. One copy of the Inhibitory domain 1 repeat lies at 171 to 224; that stretch reads ETKEDTTTYTGPEVSDPMSSTYIEELGKREVTLPPKYRELLNKEEGIAGPPPDS. Basic and acidic residues predominate over residues 195–216; it reads ELGKREVTLPPKYRELLNKEEG. 2 positions are modified to phosphoserine: S224 and S245. Composition is skewed to basic and acidic residues over residues 249-263 and 306-367; these read DAKK…EEAL and PRPE…KPLS. An Inhibitory domain 2 repeat occupies 307 to 359; that stretch reads RPELDPSSIKEVDEAKAKEEKVKKCGEDEERVPSEYRLKPATDKDGKPLLPEA. Phosphoserine occurs at positions 367, 369, and 376. The span at 378-396 shows a compositional bias: basic and acidic residues; sequence DFDRSKCKEKQSKPTEKNR. Residue S443 is modified to Phosphoserine. Basic and acidic residues predominate over residues 445–504; sequence GKKEADPEDGKPVEDKVKEKAKEEDREKLGEREETIPPDYRLEEAKDKDGKPLPPKEVKE. The stretch at 449 to 502 is one Inhibitory domain 3 repeat; that stretch reads ADPEDGKPVEDKVKEKAKEEDREKLGEREETIPPDYRLEEAKDKDGKPLPPKEV. Phosphoserine occurs at positions 519 and 530. Residues 547–723 form a disordered region; the sequence is SQTPAPTTQA…KPKADGKSTS (177 aa). The segment covering 548 to 560 has biased composition (low complexity); it reads QTPAPTTQAAGPP. Over residues 562-571 the composition is skewed to basic and acidic residues; it reads DSARDNKELD. 2 positions are modified to phosphoserine: S578 and S580. The Inhibitory domain 4 repeat unit spans residues 586-642; it reads PDPDEHKPVEDKVKEKAKAEHRDKLGERDDTIPPKYQHLLDDNKEGTPGKPKRSESP. Residues 586–643 show a composition bias toward basic and acidic residues; sequence PDPDEHKPVEDKVKEKAKAEHRDKLGERDDTIPPKYQHLLDDNKEGTPGKPKRSESPR. The span at 653–670 shows a compositional bias: polar residues; sequence NLQVPRTPLTPSQGTWTA. A compositionally biased stretch (low complexity) spans 672–690; the sequence is PQLQKPQQTQQRTKTRSLL. Over residues 701–723 the composition is skewed to basic and acidic residues; it reads KAKDSTKAKEETSKPKADGKSTS.

The protein belongs to the protease inhibitor I27 (calpastatin) family.

In terms of biological role, specific inhibition of calpain (calcium-dependent cysteine protease). Plays a key role in postmortem tenderization of meat and have been proposed to be involved in muscle protein degradation in living tissue. The chain is Calpastatin (CAST) from Ovis aries (Sheep).